The sequence spans 447 residues: Na(+)-translocating NADH-quinone reductase subunit A (447 aa).

It belongs to the NqrA family. Composed of six subunits; NqrA, NqrB, NqrC, NqrD, NqrE and NqrF.

The enzyme catalyses a ubiquinone + n Na(+)(in) + NADH + H(+) = a ubiquinol + n Na(+)(out) + NAD(+). Functionally, NQR complex catalyzes the reduction of ubiquinone-1 to ubiquinol by two successive reactions, coupled with the transport of Na(+) ions from the cytoplasm to the periplasm. NqrA to NqrE are probably involved in the second step, the conversion of ubisemiquinone to ubiquinol. The polypeptide is Na(+)-translocating NADH-quinone reductase subunit A (Neisseria gonorrhoeae (strain NCCP11945)).